A 358-amino-acid polypeptide reads, in one-letter code: 3-isopropylmalate dehydrogenase (358 aa).

Residues Arg-92, Arg-102, Arg-130, and Asp-224 each coordinate substrate. Residues Asp-224, Asp-248, and Asp-252 each coordinate Mg(2+). Residue 282 to 294 (GSAPDIAGQGIAN) coordinates NAD(+).

The protein belongs to the isocitrate and isopropylmalate dehydrogenases family. LeuB type 1 subfamily. As to quaternary structure, homodimer. It depends on Mg(2+) as a cofactor. Mn(2+) is required as a cofactor.

The protein resides in the cytoplasm. It carries out the reaction (2R,3S)-3-isopropylmalate + NAD(+) = 4-methyl-2-oxopentanoate + CO2 + NADH. Its pathway is amino-acid biosynthesis; L-leucine biosynthesis; L-leucine from 3-methyl-2-oxobutanoate: step 3/4. Its function is as follows. Catalyzes the oxidation of 3-carboxy-2-hydroxy-4-methylpentanoate (3-isopropylmalate) to 3-carboxy-4-methyl-2-oxopentanoate. The product decarboxylates to 4-methyl-2 oxopentanoate. The chain is 3-isopropylmalate dehydrogenase from Bordetella avium (strain 197N).